The primary structure comprises 164 residues: Protein-export protein SecB (164 aa).

The protein belongs to the SecB family. In terms of assembly, homotetramer, a dimer of dimers. One homotetramer interacts with 1 SecA dimer.

Its subcellular location is the cytoplasm. In terms of biological role, one of the proteins required for the normal export of preproteins out of the cell cytoplasm. It is a molecular chaperone that binds to a subset of precursor proteins, maintaining them in a translocation-competent state. It also specifically binds to its receptor SecA. This Shewanella denitrificans (strain OS217 / ATCC BAA-1090 / DSM 15013) protein is Protein-export protein SecB.